The following is a 100-amino-acid chain: Large ribosomal subunit protein uL23 (100 aa).

It belongs to the universal ribosomal protein uL23 family. Part of the 50S ribosomal subunit. Contacts protein L29, and trigger factor when it is bound to the ribosome.

In terms of biological role, one of the early assembly proteins it binds 23S rRNA. One of the proteins that surrounds the polypeptide exit tunnel on the outside of the ribosome. Forms the main docking site for trigger factor binding to the ribosome. This Prochlorococcus marinus (strain MIT 9515) protein is Large ribosomal subunit protein uL23.